The chain runs to 70 residues: Chondroitin proteoglycan 9 (70 aa).

The first 19 residues, methionine 1–glycine 19, serve as a signal peptide directing secretion. Residues serine 25 and serine 27 are each glycosylated (O-linked (Xyl...) (chondroitin sulfate) serine).

In Caenorhabditis briggsae, this protein is Chondroitin proteoglycan 9 (cpg-9).